Reading from the N-terminus, the 93-residue chain is Large ribosomal subunit protein uL23cz/uL23cy (93 aa).

Belongs to the universal ribosomal protein uL23 family. Part of the 50S ribosomal subunit.

Its subcellular location is the plastid. It is found in the chloroplast. In terms of biological role, binds to 23S rRNA. This is Large ribosomal subunit protein uL23cz/uL23cy (rpl23-A) from Platanus occidentalis (Sycamore).